The sequence spans 2641 residues: Prosolanapyrone synthase (2641 aa).

Residues 14-440 (PEPIAIVGMG…GANGHCIIDD (427 aa)) enclose the Ketosynthase family 3 (KS3) domain. Catalysis depends on for beta-ketoacyl synthase activity residues cysteine 187, histidine 323, and histidine 363. The segment at 456 to 515 (SIGHINGHTNGHTNGHTNGHTNGHTNGHTNGHTNGAHASDGHNGHHQNGMNGNSASHMSE) is disordered. A compositionally biased stretch (low complexity) spans 461–490 (NGHTNGHTNGHTNGHTNGHTNGHTNGHTNG). The interval 619 to 920 (FVFTGQGAQW…KGPVGQISRS (302 aa)) is malonyl-CoA:ACP transacylase (MAT). The interval 1011–1149 (HDLLGSKLPG…GRVRVIAGTS (139 aa)) is N-terminal hotdog fold. The dehydratase (DH) domain stretch occupies residues 1011–1309 (HDLLGSKLPG…GNLRCVTYTE (299 aa)). The PKS/mFAS DH domain occupies 1011–1313 (HDLLGSKLPG…CVTYTEVLPS (303 aa)). Histidine 1043 serves as the catalytic Proton acceptor; for dehydratase activity. The tract at residues 1161–1313 (ARTLDTKAWY…CVTYTEVLPS (153 aa)) is C-terminal hotdog fold. The Proton donor; for dehydratase activity role is filled by aspartate 1227. The methyltransferase (MT) domain stretch occupies residues 1477-1665 (TGAYPQLVRF…GAELVLDDYP (189 aa)). An enoyl reductase (ER) domain region spans residues 1894-2206 (GLLTSLYFKP…KGTHVGKLVV (313 aa)). Residues 2231-2408 (NYLITGGLGG…STVSFGLIRD (178 aa)) are ketoreductase (KR) domain. The region spanning 2561 to 2639 (RTVALVTDAI…ILANKIVDGA (79 aa)) is the Carrier domain. Serine 2598 bears the O-(pantetheine 4'-phosphoryl)serine mark.

The protein operates within phytotoxin biosynthesis. In terms of biological role, prosolanapyrone synthase; part of the gene cluster that mediates the biosynthesis of the phytotoxin solanapyrone, a causal agent of early blight disease of potato and tomato. The prosolanapyrone synthase sol1 is a polyketide synthase that produces the octaketide desmethylprosolanapyrone I via sequential condensations of 7 malonyl-CoA units with one acetyl-CoA unit, and one methylation step. The octaketide backbone is further methylated by the sol2 O-methyltransferase to yield prosolanapyrone I. Prosolanapyrone I is hydroxylated to prosolanapyrone II by the cytochrome P450 monooxygenase sol6. The solanapyrone synthase sol5 then catalyzes the oxidation of prosolanapyrone II and the subsequent Diels Alder cycloisomerization of the product prosolanapyrone III to solanapyrones A and D. Solanapyrones A and D are then converted into solanapyrones B and E, respectively, by the sol3 dehydrogenase. The sequence is that of Prosolanapyrone synthase (sol1) from Alternaria solani.